A 58-amino-acid polypeptide reads, in one-letter code: Small ribosomal subunit protein bS21 (58 aa).

The segment at 37–58 (FYEKPSVKRKKKSEAARKRKKF) is disordered. A compositionally biased stretch (basic residues) spans 43–58 (VKRKKKSEAARKRKKF).

Belongs to the bacterial ribosomal protein bS21 family.

The sequence is that of Small ribosomal subunit protein bS21 from Enterococcus faecalis (strain ATCC 700802 / V583).